We begin with the raw amino-acid sequence, 269 residues long: Formamidopyrimidine-DNA glycosylase (269 aa).

The active-site Schiff-base intermediate with DNA is the proline 2. The Proton donor role is filled by glutamate 3. Lysine 57 functions as the Proton donor; for beta-elimination activity in the catalytic mechanism. Residues histidine 90, arginine 109, and arginine 150 each coordinate DNA. The FPG-type zinc finger occupies 235-269 (QVYGRKGEPCRVCGTPVVATKHAQRATFYCRHCQK). The active-site Proton donor; for delta-elimination activity is arginine 259.

The protein belongs to the FPG family. Monomer. It depends on Zn(2+) as a cofactor.

It carries out the reaction Hydrolysis of DNA containing ring-opened 7-methylguanine residues, releasing 2,6-diamino-4-hydroxy-5-(N-methyl)formamidopyrimidine.. It catalyses the reaction 2'-deoxyribonucleotide-(2'-deoxyribose 5'-phosphate)-2'-deoxyribonucleotide-DNA = a 3'-end 2'-deoxyribonucleotide-(2,3-dehydro-2,3-deoxyribose 5'-phosphate)-DNA + a 5'-end 5'-phospho-2'-deoxyribonucleoside-DNA + H(+). In terms of biological role, involved in base excision repair of DNA damaged by oxidation or by mutagenic agents. Acts as a DNA glycosylase that recognizes and removes damaged bases. Has a preference for oxidized purines, such as 7,8-dihydro-8-oxoguanine (8-oxoG). Has AP (apurinic/apyrimidinic) lyase activity and introduces nicks in the DNA strand. Cleaves the DNA backbone by beta-delta elimination to generate a single-strand break at the site of the removed base with both 3'- and 5'-phosphates. The polypeptide is Formamidopyrimidine-DNA glycosylase (Salmonella arizonae (strain ATCC BAA-731 / CDC346-86 / RSK2980)).